A 372-amino-acid chain; its full sequence is Inner membrane protein YbiR (372 aa).

Topologically, residues 1-13 are periplasmic; sequence MSLPFLRTLQGDR. The next 2 helical transmembrane spans lie at 14 to 34 and 35 to 55; these read FFQL…FAPK and SWPA…MLLT. The Periplasmic segment spans residues 56–85; that stretch reads KGVELSGYFDVLGRKMVRRFATERRLAMFM. Residues 86–106 traverse the membrane as a helical segment; it reads VLAAALLSTFLTNDVALFIVV. Over 107–122 the chain is Cytoplasmic; it reads PLTITLKRLCEIPVNR. Residues 123-143 form a helical membrane-spanning segment; sequence LIIFEALAVNAGSLLTPIGNP. Residues 144 to 155 lie on the Periplasmic side of the membrane; the sequence is QNILIWGRSGLS. The chain crosses the membrane as a helical span at residues 156-176; the sequence is FAGFIAQMAPLAGAMMLTLLL. The Cytoplasmic segment spans residues 177–208; sequence LCWCCFPGKAMQYHTGVQTPEWKPRLVWSCLG. A helical transmembrane segment spans residues 209-229; it reads LYIVFLTALEFKQELWGLVIV. Residues 230 to 247 are Periplasmic-facing; sequence AAGFALLARRVVLSVDWT. The helical transmembrane segment at 248-268 threads the bilayer; that stretch reads LLLVFMAMFIDVHLLTQLPAL. Residues 269–283 lie on the Cytoplasmic side of the membrane; that stretch reads QGVLGNVSHLSEPGL. A helical transmembrane segment spans residues 284–304; the sequence is WLTAIGLSQVISNVPSTILLL. Residues 305–309 lie on the Periplasmic side of the membrane; it reads NYVPP. The chain crosses the membrane as a helical span at residues 310-330; the sequence is SLLLVWAVNVGGFGLLPGSLA. Over 331–348 the chain is Cytoplasmic; it reads NLIALRMANDRRIWWRFH. The helical transmembrane segment at 349 to 369 threads the bilayer; sequence LYSIPMLLWAALVGYVLLVIL. The Periplasmic portion of the chain corresponds to 370-372; the sequence is PAN.

Belongs to the CitM (TC 2.A.11) transporter family.

The protein localises to the cell inner membrane. This chain is Inner membrane protein YbiR (ybiR), found in Escherichia coli (strain K12).